Here is a 328-residue protein sequence, read N- to C-terminus: Malate dehydrogenase (328 aa).

12 to 18 serves as a coordination point for NAD(+); the sequence is GAAGQIG. 2 residues coordinate substrate: Arg93 and Arg99. NAD(+)-binding positions include Asn106, Gln113, and 130–132; that span reads VGN. 2 residues coordinate substrate: Asn132 and Arg166. His191 functions as the Proton acceptor in the catalytic mechanism.

It belongs to the LDH/MDH superfamily. MDH type 2 family.

It catalyses the reaction (S)-malate + NAD(+) = oxaloacetate + NADH + H(+). Functionally, catalyzes the reversible oxidation of malate to oxaloacetate. The chain is Malate dehydrogenase from Dechloromonas aromatica (strain RCB).